Reading from the N-terminus, the 718-residue chain is Ribonuclease J (718 aa).

The disordered stretch occupies residues 1–130 (MNDSRNRGRK…RGNRGGGRRN (130 aa)). Low complexity-rich tracts occupy residues 55–91 (AAQG…NNNR) and 100–118 (SGNA…NRQG). Residues histidine 220, histidine 222, aspartate 224, histidine 225, histidine 287, and aspartate 309 each contribute to the Zn(2+) site. 510-514 (HTSGH) serves as a coordination point for substrate. Histidine 536 is a Zn(2+) binding site.

Belongs to the metallo-beta-lactamase superfamily. RNA-metabolizing metallo-beta-lactamase-like family. Bacterial RNase J subfamily. Homodimer, may be a subunit of the RNA degradosome. The cofactor is Zn(2+).

Its subcellular location is the cytoplasm. Functionally, an RNase that has 5'-3' exonuclease and possibly endoonuclease activity. Involved in maturation of rRNA and in some organisms also mRNA maturation and/or decay. The polypeptide is Ribonuclease J (Corynebacterium glutamicum (strain ATCC 13032 / DSM 20300 / JCM 1318 / BCRC 11384 / CCUG 27702 / LMG 3730 / NBRC 12168 / NCIMB 10025 / NRRL B-2784 / 534)).